The sequence spans 124 residues: MPTINQLIKSERTVQKNQTKSPALDSCPQRRGVCTRVYTTTPKKPNSALRKVAKVRLSNGFEVISYIPGIGHNLQEHSVVLIRGGRVKDLPGVRYHIVRGVLDLQGVNGRLRARSKYGTKRPKK.

The disordered stretch occupies residues 9-28 (KSERTVQKNQTKSPALDSCP). D89 is modified (3-methylthioaspartic acid).

Belongs to the universal ribosomal protein uS12 family. In terms of assembly, part of the 30S ribosomal subunit. Contacts proteins S8 and S17. May interact with IF1 in the 30S initiation complex.

With S4 and S5 plays an important role in translational accuracy. Its function is as follows. Interacts with and stabilizes bases of the 16S rRNA that are involved in tRNA selection in the A site and with the mRNA backbone. Located at the interface of the 30S and 50S subunits, it traverses the body of the 30S subunit contacting proteins on the other side and probably holding the rRNA structure together. The combined cluster of proteins S8, S12 and S17 appears to hold together the shoulder and platform of the 30S subunit. The polypeptide is Small ribosomal subunit protein uS12 (Bdellovibrio bacteriovorus (strain ATCC 15356 / DSM 50701 / NCIMB 9529 / HD100)).